Consider the following 197-residue polypeptide: Imidazoleglycerol-phosphate dehydratase (197 aa).

Belongs to the imidazoleglycerol-phosphate dehydratase family.

The protein resides in the cytoplasm. The catalysed reaction is D-erythro-1-(imidazol-4-yl)glycerol 3-phosphate = 3-(imidazol-4-yl)-2-oxopropyl phosphate + H2O. The protein operates within amino-acid biosynthesis; L-histidine biosynthesis; L-histidine from 5-phospho-alpha-D-ribose 1-diphosphate: step 6/9. The protein is Imidazoleglycerol-phosphate dehydratase of Bradyrhizobium diazoefficiens (strain JCM 10833 / BCRC 13528 / IAM 13628 / NBRC 14792 / USDA 110).